A 777-amino-acid polypeptide reads, in one-letter code: Lon protease (777 aa).

Positions 11–204 constitute a Lon N-terminal domain; the sequence is IPVLPLRDVV…FLMAIMESEI (194 aa). An ATP-binding site is contributed by 356-363; the sequence is GPPGVGKT. One can recognise a Lon proteolytic domain in the interval 592–773; that stretch reads TNQIGQVIGL…EEVLKLSLEK (182 aa). Active-site residues include serine 679 and lysine 722.

This sequence belongs to the peptidase S16 family. In terms of assembly, homohexamer. Organized in a ring with a central cavity.

It localises to the cytoplasm. The catalysed reaction is Hydrolysis of proteins in presence of ATP.. Functionally, ATP-dependent serine protease that mediates the selective degradation of mutant and abnormal proteins as well as certain short-lived regulatory proteins. Required for cellular homeostasis and for survival from DNA damage and developmental changes induced by stress. Degrades polypeptides processively to yield small peptide fragments that are 5 to 10 amino acids long. Binds to DNA in a double-stranded, site-specific manner. This is Lon protease from Buchnera aphidicola subsp. Acyrthosiphon pisum (strain APS) (Acyrthosiphon pisum symbiotic bacterium).